We begin with the raw amino-acid sequence, 628 residues long: Alpha pinene synthase, chloroplastic (628 aa).

The N-terminal 46 residues, 1–46 (MSLGCITPLASAMVGPKLVRPLIHHNPLFHHKPLNRPYLQTKIPLR), are a transit peptide targeting the chloroplast. Mg(2+) is bound by residues Asp381, Asp385, and Glu532. The DDXXD motif signature appears at 381-385 (DDMYD).

It belongs to the terpene synthase family. Tpsa subfamily. It depends on Mg(2+) as a cofactor. Mn(2+) serves as cofactor.

The protein localises to the plastid. The protein resides in the chloroplast. The catalysed reaction is (2E)-geranyl diphosphate = alpha-pinene + diphosphate. It participates in secondary metabolite biosynthesis; terpenoid biosynthesis. In terms of biological role, monoterpene synthase involved in the biosynthesis of volatile compounds. Mediates the conversion of (2E)-geranyl diphosphate (GPP) into alpha-pinene. The sequence is that of Alpha pinene synthase, chloroplastic from Chamaecyparis formosensis (Formosan cypress).